Here is a 380-residue protein sequence, read N- to C-terminus: Variant-surface-glycoprotein phospholipase C (380 aa).

One can recognise a PI-PLC X-box domain in the interval 31–205; the sequence is ITQVCFVGSH…SRRRIFLVVG (175 aa).

Monomer.

The protein resides in the membrane. It carries out the reaction a 6-(alpha-D-glucosaminyl)-1-(1,2-diacyl-sn-glycero-3-phospho)-1D-myo-inositol = 6-(alpha-D-glucosaminyl)-1D-myo-inositol 1,2-cyclic phosphate + a 1,2-diacyl-sn-glycerol. Functionally, by hydrolysis of the attached glycolipid, releases soluble variant surface glycoprotein containing phosphoinositol from the cell wall of T.brucei after cell lysis. It also cleaves similar membrane anchors on some mammalian proteins. VSG lipase may play a role in processes such as parasite differentiation or antigenic variation. This is Variant-surface-glycoprotein phospholipase C from Trypanosoma cruzi.